The primary structure comprises 58 residues: Conotoxin Leo-T2 (58 aa).

A signal peptide spans 1-22; the sequence is MRCLPVFIILPLLIPSAPSVDA. The propeptide occupies 23–47; sequence QPMTEDDVPLASFHEQTLQELWNKR.

It belongs to the conotoxin T superfamily. Post-translationally, contains 2 disulfide bonds that can be either 'C1-C3, C2-C4' or 'C1-C4, C2-C3', since these disulfide connectivities have been observed for conotoxins with cysteine framework V (for examples, see AC P0DQQ7 and AC P81755). In terms of tissue distribution, expressed by the venom duct.

Its subcellular location is the secreted. This chain is Conotoxin Leo-T2, found in Conus leopardus (Leopard cone).